The following is a 246-amino-acid chain: Ribosome maturation factor RimM (246 aa).

Positions 1–15 (MKRKQESKGAGEKRQ) are enriched in basic and acidic residues. The tract at residues 1 to 63 (MKRKQESKGA…NPQFTTPNPD (63 aa)) is disordered. Residues 45 to 54 (VPSPQSPIPN) show a composition bias toward pro residues. The region spanning 158-239 (GEDEYHVVDL…RIEITPPPGL (82 aa)) is the PRC barrel domain.

The protein belongs to the RimM family. Binds ribosomal protein uS19.

The protein localises to the cytoplasm. In terms of biological role, an accessory protein needed during the final step in the assembly of 30S ribosomal subunit, possibly for assembly of the head region. Essential for efficient processing of 16S rRNA. May be needed both before and after RbfA during the maturation of 16S rRNA. It has affinity for free ribosomal 30S subunits but not for 70S ribosomes. The protein is Ribosome maturation factor RimM of Nostoc sp. (strain PCC 7120 / SAG 25.82 / UTEX 2576).